We begin with the raw amino-acid sequence, 431 residues long: Histidine--tRNA ligase (431 aa).

Belongs to the class-II aminoacyl-tRNA synthetase family. Homodimer.

The protein resides in the cytoplasm. The catalysed reaction is tRNA(His) + L-histidine + ATP = L-histidyl-tRNA(His) + AMP + diphosphate + H(+). The protein is Histidine--tRNA ligase of Finegoldia magna (strain ATCC 29328 / DSM 20472 / WAL 2508) (Peptostreptococcus magnus).